Here is a 687-residue protein sequence, read N- to C-terminus: Glycine--tRNA ligase beta subunit (687 aa).

The protein belongs to the class-II aminoacyl-tRNA synthetase family. In terms of assembly, tetramer of two alpha and two beta subunits.

It is found in the cytoplasm. The catalysed reaction is tRNA(Gly) + glycine + ATP = glycyl-tRNA(Gly) + AMP + diphosphate. The chain is Glycine--tRNA ligase beta subunit from Geobacter sulfurreducens (strain ATCC 51573 / DSM 12127 / PCA).